The chain runs to 242 residues: MLWLDLGNTRLKYWLTDDIGQIVSHDAKQHLQAPAELLMGLTDRFERYAPDFIGISSVLGDDLNIKVSETLSRLNIPFEFVHVDANYPLMKSAYNDEQLGCDRWLQMLGAVDKTKRQCLIGCGTAITIDLIDHATHLGGYIFPSIYLQRESLFSGTKQITISNGTFDSVSQGITTQDAVHRGILLSIVGAINEISTRHPNFEVIMTGGDAAIIAQHVNRPVRLRDDLLLNGLARYFDHSKQS.

5–12 (DLGNTRLK) provides a ligand contact to ATP. Residues Tyr94 and 100-103 (GCDR) each bind substrate. Asp102 acts as the Proton acceptor in catalysis. An ATP-binding site is contributed by Thr124. A substrate-binding site is contributed by Thr175.

This sequence belongs to the type III pantothenate kinase family. In terms of assembly, homodimer. Requires NH4(+) as cofactor. The cofactor is K(+).

It localises to the cytoplasm. It catalyses the reaction (R)-pantothenate + ATP = (R)-4'-phosphopantothenate + ADP + H(+). Its pathway is cofactor biosynthesis; coenzyme A biosynthesis; CoA from (R)-pantothenate: step 1/5. Its function is as follows. Catalyzes the phosphorylation of pantothenate (Pan), the first step in CoA biosynthesis. The polypeptide is Type III pantothenate kinase (Psychrobacter arcticus (strain DSM 17307 / VKM B-2377 / 273-4)).